The chain runs to 537 residues: Myosin-binding protein H (537 aa).

Low complexity predominate over residues 1 to 25 (MTGKTAPAAAKKAPAAKKAPAPASK). Residues 1 to 138 (MTGKTAPAAA…KPKEEPPSVP (138 aa)) form a disordered region. Over residues 26–69 (KAPEPAPKEKPAPTPKEGHAPTPKEEHAPPPKEEHAPPPKEEHA) the composition is skewed to basic and acidic residues. The span at 87–104 (EQPAAPAAEHAPTPTHEA) shows a compositional bias: low complexity. A compositionally biased stretch (pro residues) spans 112-124 (PPPAAPAEAPAPE). The Fibronectin type-III 1 domain maps to 137-232 (VPLSLAVEEV…LEQPVLIREI (96 aa)). Positions 236–324 (PRIRLPRQLR…NGAEDKAILD (89 aa)) constitute an Ig-like C2-type 1 domain. The Fibronectin type-III 2 domain occupies 333–428 (PPQNLKLVDV…AAGVAHIKKT (96 aa)). The Ig-like C2-type 2 domain maps to 444-528 (PKFTQPLTDR…VNPLGEASVD (85 aa)).

Belongs to the immunoglobulin superfamily. MyBP family. Skeletal muscle. Seems to be also expressed in the slow tonic ald muscle. Not detected in gizzard or heart.

In terms of biological role, binds to myosin; probably involved in interaction with thick myofilaments in the A-band. The sequence is that of Myosin-binding protein H (MYBPH) from Gallus gallus (Chicken).